A 389-amino-acid polypeptide reads, in one-letter code: GTPase Obg (389 aa).

The 159-residue stretch at Met1–Leu159 folds into the Obg domain. Residues Ala160 to Glu333 form the OBG-type G domain. GTP-binding positions include Gly166 to Ser173, Phe191 to Ile195, Asp213 to Gly216, Asn283 to Asp286, and Ser314 to Val316. Positions 173 and 193 each coordinate Mg(2+). Residues Asn359–Glu389 are disordered. Acidic residues predominate over residues Ile364–Asp381.

The protein belongs to the TRAFAC class OBG-HflX-like GTPase superfamily. OBG GTPase family. In terms of assembly, monomer. Mg(2+) serves as cofactor.

The protein resides in the cytoplasm. Functionally, an essential GTPase which binds GTP, GDP and possibly (p)ppGpp with moderate affinity, with high nucleotide exchange rates and a fairly low GTP hydrolysis rate. Plays a role in control of the cell cycle, stress response, ribosome biogenesis and in those bacteria that undergo differentiation, in morphogenesis control. This is GTPase Obg from Vibrio vulnificus (strain CMCP6).